Here is a 465-residue protein sequence, read N- to C-terminus: Gamma-aminobutyric acid receptor subunit gamma-1 (465 aa).

The first 20 residues, 1-20 (MGSGKVFLFSPSLLWSQTRG), serve as a signal peptide directing secretion. The Extracellular segment spans residues 21–273 (VRLIFLLLTL…FDLSRRMGYF (253 aa)). Residues N50 and N127 are each glycosylated (N-linked (GlcNAc...) asparagine). The cysteines at positions 188 and 202 are disulfide-linked. N245 carries an N-linked (GlcNAc...) asparagine glycan. A helical membrane pass occupies residues 274-294 (TIQTYIPCILTVVLSWVSFWI). Residues 295–300 (NKDAVP) are Cytoplasmic-facing. Residues 301-320 (ARTSLGITTVLTMTTLSTIA) traverse the membrane as a helical segment. The Extracellular segment spans residues 321–328 (RKSLPKVS). The helical transmembrane segment at 329-349 (YVTAMDLFVSVCFIFVFAALM) threads the bilayer. Residues 350–444 (EYGTLHYFTS…RIAKIDSYSR (95 aa)) are Cytoplasmic-facing. Residues 445–465 (IFFPTAFALFNLVYWVGYLYL) traverse the membrane as a helical segment.

The protein belongs to the ligand-gated ion channel (TC 1.A.9) family. Gamma-aminobutyric acid receptor (TC 1.A.9.5) subfamily. GABRG1 sub-subfamily. As to quaternary structure, heteropentamer, formed by a combination of alpha (GABRA1-6), beta (GABRB1-3), gamma (GABRG1-3), delta (GABRD), epsilon (GABRE), rho (GABRR1-3), pi (GABRP) and theta (GABRQ) chains, each subunit exhibiting distinct physiological and pharmacological properties. In terms of processing, may be palmitoylated. Expressed in brain.

Its subcellular location is the postsynaptic cell membrane. It is found in the cell membrane. The catalysed reaction is chloride(in) = chloride(out). Functionally, gamma subunit of the heteropentameric ligand-gated chloride channel gated by gamma-aminobutyric acid (GABA), a major inhibitory neurotransmitter in the brain. GABA-gated chloride channels, also named GABA(A) receptors (GABAAR), consist of five subunits arranged around a central pore and contain GABA active binding site(s) located at the alpha and beta subunit interface(s). When activated by GABA, GABAARs selectively allow the flow of chloride anions across the cell membrane down their electrochemical gradient. Chloride influx into the postsynaptic neuron following GABAAR opening decreases the neuron ability to generate a new action potential, thereby reducing nerve transmission. This Rattus norvegicus (Rat) protein is Gamma-aminobutyric acid receptor subunit gamma-1.